A 392-amino-acid chain; its full sequence is 23S rRNA (uracil(747)-C(5))-methyltransferase RlmC (392 aa).

[4Fe-4S] cluster contacts are provided by Cys4, Cys12, Cys15, and Cys93. The S-adenosyl-L-methionine site is built by Gln218, Phe247, Glu275, and Asn321. The Nucleophile role is filled by Cys348.

It belongs to the class I-like SAM-binding methyltransferase superfamily. RNA M5U methyltransferase family. RlmC subfamily.

The enzyme catalyses uridine(747) in 23S rRNA + S-adenosyl-L-methionine = 5-methyluridine(747) in 23S rRNA + S-adenosyl-L-homocysteine + H(+). Functionally, catalyzes the formation of 5-methyl-uridine at position 747 (m5U747) in 23S rRNA. The polypeptide is 23S rRNA (uracil(747)-C(5))-methyltransferase RlmC (Haemophilus influenzae (strain 86-028NP)).